We begin with the raw amino-acid sequence, 155 residues long: Troponin C, isoform 2 (155 aa).

4 consecutive EF-hand domains span residues 11–46 (EQIAVLQKAFNSFDHQKTGSIPTEMVADILRLMGQP), 47–82 (FDRQILDELIDEVDEDKSGRLEFEEFVQLAAKFIVE), 87–122 (AMQKELREAFRLYDKQGNGYIPTSCLKEILKELDDQ), and 123–155 (LTEQELDIMIEEIDSDGSGTVDFDEFMEMMTGE). 5 residues coordinate Ca(2+): Asp-60, Asp-62, Ser-64, Arg-66, and Glu-71. Ca(2+) is bound by residues Asp-136, Asp-138, Ser-140, Thr-142, and Glu-147.

It belongs to the troponin C family. Accumulates almost exclusively in larval muscles.

The sequence is that of Troponin C, isoform 2 (TpnC47D) from Drosophila melanogaster (Fruit fly).